The chain runs to 527 residues: MTKHNEQEIDRRRTFAIISHPDAGKTTITEKLLLFGGAIQQAGEVRARKAARHATSDWMEMEKQRGISVTSSVMKFTYRNYEVNLLDTPGHNDFSEDTYRVLTAVDSALMVIDAVKGVESQTIKLLDVCRLRHTPIMTFVNKLDREGRDPFELIDEIEKVLKIQCAPMTWPIGMGKRFRGTYHLYTKELIIFDAEAERGTGSIVSLSGLDDPRLDEILGSQAAELRGDIELLEGAAHPFEEEAYLAGLQTPVFFGSAINTFGVQQLLDTFVENAPAPLPREAVTRTVSPYEEPFAAFAFKIQANMDPAHRDRIAFFRICSGKFTRGMKVRHVRLGREVAINNATIFMAQDRTHVDEAFPGDIIGIHNHGTIKIGDTFTMGEELKFTGIPNFAPEHFRKVRLLDPLKSKALEKGLTQLAEEGTTQVFRPLMGADWIVGAVGILQFDVVMHRLEHEYNVKATYEPAAYATARWVTGEKKKLEEFQKKEVMSCYIDGEGNLAYLASSQWRLDNTMDNWKDLQFHATREHS.

A tr-type G domain is found at 10–278 (DRRRTFAIIS…TFVENAPAPL (269 aa)). GTP-binding positions include 19–26 (SHPDAGKT), 87–91 (DTPGH), and 141–144 (NKLD).

It belongs to the TRAFAC class translation factor GTPase superfamily. Classic translation factor GTPase family. PrfC subfamily.

Its subcellular location is the cytoplasm. Its function is as follows. Increases the formation of ribosomal termination complexes and stimulates activities of RF-1 and RF-2. It binds guanine nucleotides and has strong preference for UGA stop codons. It may interact directly with the ribosome. The stimulation of RF-1 and RF-2 is significantly reduced by GTP and GDP, but not by GMP. This chain is Peptide chain release factor 3, found in Geobacter metallireducens (strain ATCC 53774 / DSM 7210 / GS-15).